Reading from the N-terminus, the 935-residue chain is C-1-tetrahydrofolate synthase, cytoplasmic (935 aa).

Methionine 1 is modified (N-acetylmethionine). Positions alanine 2–alanine 291 are methylenetetrahydrofolate dehydrogenase and methenyltetrahydrofolate cyclohydrolase (D/C) domain. Residues tyrosine 52–lysine 56 and valine 99–leucine 101 each bind substrate. Residue lysine 56 is part of the active site. Residues glycine 172–serine 174 and serine 197 each bind NADP(+). Residue proline 272–glycine 276 coordinates substrate. The formyltetrahydrofolate synthetase domain stretch occupies residues leucine 310–phenylalanine 935. A Phosphoserine modification is found at serine 318. Threonine 380–serine 387 lines the ATP pocket. Residues serine 413 and serine 490 each carry the phosphoserine modification.

In the N-terminal section; belongs to the tetrahydrofolate dehydrogenase/cyclohydrolase family. The protein in the C-terminal section; belongs to the formate--tetrahydrofolate ligase family. In terms of assembly, homodimer.

The protein localises to the cytoplasm. The enzyme catalyses (6R)-5,10-methylene-5,6,7,8-tetrahydrofolate + NADP(+) = (6R)-5,10-methenyltetrahydrofolate + NADPH. It catalyses the reaction (6R)-5,10-methenyltetrahydrofolate + H2O = (6R)-10-formyltetrahydrofolate + H(+). The catalysed reaction is (6S)-5,6,7,8-tetrahydrofolate + formate + ATP = (6R)-10-formyltetrahydrofolate + ADP + phosphate. Its pathway is one-carbon metabolism; tetrahydrofolate interconversion. In terms of biological role, trifunctional enzyme that catalyzes the interconversion of three forms of one-carbon-substituted tetrahydrofolate: (6R)-5,10-methylene-5,6,7,8-tetrahydrofolate, 5,10-methenyltetrahydrofolate and (6S)-10-formyltetrahydrofolate. These derivatives of tetrahydrofolate are differentially required in nucleotide and amino acid biosynthesis, (6S)-10-formyltetrahydrofolate being required for purine biosynthesis while (6R)-5,10-methylene-5,6,7,8-tetrahydrofolate is used for serine and methionine biosynthesis for instance. The chain is C-1-tetrahydrofolate synthase, cytoplasmic (MTHFD1) from Pongo abelii (Sumatran orangutan).